Here is a 537-residue protein sequence, read N- to C-terminus: MNQTKYIFVTGGVTSSLGKGIIAASLAKLLQARGYRTTIQKFDPYINVDPGTLNPYEHGECYVTNDGAETDLDLGHYERFLNVPTSQANNVTTGRIYLSVIEKERRGEFLGKTVQVVPHITNEIKERMQLLGKSGDYDIVITEIGGTVGDIESLPYIESVRQLVWELGENNGIVIHLTLVPFLAAAGELKTKPTQHSVKTLMESGIKADILVCRTEYELSEDLRHKLALFCNVKREAVIQSIDASTIYDVPNLMLEEGLDKVALKKLDLPEKSTPDLKQWNEFLQKHKNPKHEVSIGLVGKYVELQDSYKSILEAFIHAGATNETKVNVISIHSEFLDVNSADEQLKGLDGILVAPGFGGRGIEGKIETVRYAREKNIPFLGICLGMQMAVIEYSRNVLGYTDANSTEMNQNTSHPVINLMEEQKTITDKGGTMRLGAWKCHLSENTLAHKIYGQSDILERHRHRYEFNSEYLEVLQKAGLKASGVNPETGLVEVIELENHPFFIGVQYHPEYKSTVLAPHPLFVSFIAAAVKHKNK.

The tract at residues Met1 to Leu269 is amidoligase domain. Ser15 lines the CTP pocket. Residue Ser15 participates in UTP binding. Ser16–Ile21 contributes to the ATP binding site. Tyr56 contributes to the L-glutamine binding site. Asp73 contributes to the ATP binding site. Mg(2+) is bound by residues Asp73 and Glu143. Residues Asp150 to Glu152, Lys190 to Gln195, and Lys226 contribute to the CTP site. UTP is bound by residues Lys190–Gln195 and Lys226. The Glutamine amidotransferase type-1 domain occupies Ser295–Lys537. Residue Gly357 coordinates L-glutamine. Cys384 functions as the Nucleophile; for glutamine hydrolysis in the catalytic mechanism. L-glutamine is bound by residues Leu385–Gln388, Glu408, and Arg465. Active-site residues include His510 and Glu512.

Belongs to the CTP synthase family. In terms of assembly, homotetramer.

It catalyses the reaction UTP + L-glutamine + ATP + H2O = CTP + L-glutamate + ADP + phosphate + 2 H(+). The catalysed reaction is L-glutamine + H2O = L-glutamate + NH4(+). The enzyme catalyses UTP + NH4(+) + ATP = CTP + ADP + phosphate + 2 H(+). Its pathway is pyrimidine metabolism; CTP biosynthesis via de novo pathway; CTP from UDP: step 2/2. Allosterically activated by GTP, when glutamine is the substrate; GTP has no effect on the reaction when ammonia is the substrate. The allosteric effector GTP functions by stabilizing the protein conformation that binds the tetrahedral intermediate(s) formed during glutamine hydrolysis. Inhibited by the product CTP, via allosteric rather than competitive inhibition. Functionally, catalyzes the ATP-dependent amination of UTP to CTP with either L-glutamine or ammonia as the source of nitrogen. Regulates intracellular CTP levels through interactions with the four ribonucleotide triphosphates. The chain is CTP synthase from Flavobacterium psychrophilum (strain ATCC 49511 / DSM 21280 / CIP 103535 / JIP02/86).